The primary structure comprises 392 residues: Odorant receptor 85f (392 aa).

At 1–36 (MEPVQYSYEDFARLPTTVFWIMGYDMLGVPKTRSRR) the chain is on the cytoplasmic side. The helical transmembrane segment at 37–57 (ILYWIYRFLCLASHGVCVGVM) threads the bilayer. The Extracellular segment spans residues 58-69 (VFRMVEAKTIDN). Asn-69 carries N-linked (GlcNAc...) asparagine glycosylation. Residues 70 to 90 (VSLIMRYATLVTYIINSDTKF) traverse the membrane as a helical segment. At 91–130 (ATVLQRSAIQSLNSKLAELYPKTTLDRIYHRVNDHYWTKS) the chain is on the cytoplasmic side. A helical transmembrane segment spans residues 131-151 (FVYLVIIYIGSSIMVVIGPII). At 152–179 (TSIIAYFTHNVFTYMHCYPYFLYDPEKD) the chain is on the extracellular side. A helical membrane pass occupies residues 180–200 (PVWIYISIYALEWLHSTQMVI). The Cytoplasmic portion of the chain corresponds to 201–268 (SNIGADIWLL…NDLNGIFGKS (68 aa)). Residues 269-289 (LLLSLLTTAAVICTVAVYTLI) form a helical membrane-spanning segment. The Extracellular portion of the chain corresponds to 290 to 295 (QGPTLE). Residues 296–316 (GFTYVIFIGTSVMQVYLVCYY) form a helical membrane-spanning segment. Over 317–363 (GQQVLDLSGEVAHAVYNHDFHDASIAYKRYLLIIIIRAQQPVELNAM) the chain is Cytoplasmic. Residues 364-384 (GYLSISLDTFKQLMSVSYRVI) traverse the membrane as a helical segment. Over 385 to 392 (TMLMQMIQ) the chain is Extracellular.

Belongs to the insect chemoreceptor superfamily. Heteromeric odorant receptor channel (TC 1.A.69) family. Or49a subfamily. As to quaternary structure, interacts with Orco. Complexes exist early in the endomembrane system in olfactory sensory neurons (OSNs), coupling these complexes to the conserved ciliary trafficking pathway. As to expression, expressed in olfactory sensory neurons in the antenna.

It is found in the cell membrane. Functionally, odorant receptor which mediates acceptance or avoidance behavior, depending on its substrates. The odorant receptor repertoire encodes a large collection of odor stimuli that vary widely in identity, intensity, and duration. May form a complex with Orco to form odorant-sensing units, providing sensitive and prolonged odorant signaling and calcium permeability. This chain is Odorant receptor 85f (Or85f), found in Drosophila melanogaster (Fruit fly).